A 637-amino-acid polypeptide reads, in one-letter code: DNA mismatch repair protein MutL (637 aa).

Belongs to the DNA mismatch repair MutL/HexB family.

In terms of biological role, this protein is involved in the repair of mismatches in DNA. It is required for dam-dependent methyl-directed DNA mismatch repair. May act as a 'molecular matchmaker', a protein that promotes the formation of a stable complex between two or more DNA-binding proteins in an ATP-dependent manner without itself being part of a final effector complex. The polypeptide is DNA mismatch repair protein MutL (Actinobacillus succinogenes (strain ATCC 55618 / DSM 22257 / CCUG 43843 / 130Z)).